The sequence spans 183 residues: Peptide deformylase (183 aa).

Cys111 and His154 together coordinate Fe cation. Glu155 is a catalytic residue. His158 is a binding site for Fe cation.

The protein belongs to the polypeptide deformylase family. It depends on Fe(2+) as a cofactor.

It carries out the reaction N-terminal N-formyl-L-methionyl-[peptide] + H2O = N-terminal L-methionyl-[peptide] + formate. In terms of biological role, removes the formyl group from the N-terminal Met of newly synthesized proteins. Requires at least a dipeptide for an efficient rate of reaction. N-terminal L-methionine is a prerequisite for activity but the enzyme has broad specificity at other positions. This is Peptide deformylase from Staphylococcus aureus (strain COL).